The following is a 320-amino-acid chain: o-succinylbenzoate synthase (320 aa).

The Proton donor role is filled by lysine 133. Residues aspartate 161, glutamate 190, and aspartate 213 each coordinate Mg(2+). Catalysis depends on lysine 235, which acts as the Proton acceptor.

It belongs to the mandelate racemase/muconate lactonizing enzyme family. MenC type 1 subfamily. The cofactor is a divalent metal cation.

The enzyme catalyses (1R,6R)-6-hydroxy-2-succinyl-cyclohexa-2,4-diene-1-carboxylate = 2-succinylbenzoate + H2O. Its pathway is quinol/quinone metabolism; 1,4-dihydroxy-2-naphthoate biosynthesis; 1,4-dihydroxy-2-naphthoate from chorismate: step 4/7. The protein operates within quinol/quinone metabolism; menaquinone biosynthesis. Its function is as follows. Converts 2-succinyl-6-hydroxy-2,4-cyclohexadiene-1-carboxylate (SHCHC) to 2-succinylbenzoate (OSB). This Escherichia coli O127:H6 (strain E2348/69 / EPEC) protein is o-succinylbenzoate synthase.